The primary structure comprises 626 residues: DNA-directed RNA polymerase subunit gamma (626 aa).

4 residues coordinate Zn(2+): cysteine 71, cysteine 73, cysteine 86, and cysteine 89. 3 residues coordinate Mg(2+): aspartate 467, aspartate 469, and aspartate 471.

Belongs to the RNA polymerase beta' chain family. RpoC1 subfamily. In cyanobacteria the RNAP catalytic core is composed of 2 alpha, 1 beta, 1 beta', 1 gamma and 1 omega subunit. When a sigma factor is associated with the core the holoenzyme is formed, which can initiate transcription. Mg(2+) is required as a cofactor. Zn(2+) serves as cofactor.

It carries out the reaction RNA(n) + a ribonucleoside 5'-triphosphate = RNA(n+1) + diphosphate. In terms of biological role, DNA-dependent RNA polymerase catalyzes the transcription of DNA into RNA using the four ribonucleoside triphosphates as substrates. This chain is DNA-directed RNA polymerase subunit gamma, found in Microcystis aeruginosa (strain NIES-843 / IAM M-2473).